A 621-amino-acid polypeptide reads, in one-letter code: MDWEKLGLKMGLEIHQQLNTKHKLFCPCKTELVDEDYNEIVERNLRPTQSELGEIDRAALQESLRGLNFKYESYDHHTCLVESDDEPPHSLNKEALEICITIAALMNMHIVDEFHTMRKQVIDGSNTGGFQRTGLAATDGYLDTPYGRVAIESLGLEEDAARRIETTEDYTEFRLDRLGIPLAEITTDPSMHHPDQVREVAYMIGQVLRSTNVKRGLGTIRQDLNISIEKGARVEIKGVQNLDLMSEIVENEVQRQLALIEIKEELNKRNAEVLEEIHDLDSLFENTKSKILSSAESIKAVVLKGFNGLIGKEVQPGRRFGTEIASYAKKRGVSGIFHSDELPAYGITQDEVNSVKDYLNVGSQDAFIIVAHDENVAISALEEVKRRANLGFEGVVEETRKSLDDGNTEYMRPLPTANRMYLETDIPLFKITDELVEPIKNNLPELPDVKKERIIKEYNLSEDLASQLVKRLEADVFEEILTDVEVDPTPVASLLAYDLREIKREGLDIDILTTRHLKDIFQLLADSKIAKDSVTKLTTCVIQSPDEEIEITAKNNNLTLLSHEEVTQIIEDIVNKNEAMVKERQMGAMGPLMGMSMKELKGKADGSIVNRIVKESIQKML.

The protein belongs to the GatB/GatE family. GatE subfamily. In terms of assembly, heterodimer of GatD and GatE.

The catalysed reaction is L-glutamyl-tRNA(Gln) + L-glutamine + ATP + H2O = L-glutaminyl-tRNA(Gln) + L-glutamate + ADP + phosphate + H(+). Its function is as follows. Allows the formation of correctly charged Gln-tRNA(Gln) through the transamidation of misacylated Glu-tRNA(Gln) in organisms which lack glutaminyl-tRNA synthetase. The reaction takes place in the presence of glutamine and ATP through an activated gamma-phospho-Glu-tRNA(Gln). The GatDE system is specific for glutamate and does not act on aspartate. The chain is Glutamyl-tRNA(Gln) amidotransferase subunit E from Methanobrevibacter smithii (strain ATCC 35061 / DSM 861 / OCM 144 / PS).